The sequence spans 263 residues: N-acetylgalactosamine permease IID component (263 aa).

One can recognise a PTS EIID domain in the interval 3 to 263; that stretch reads SEISKKDITR…SIVCSAFGIL (261 aa). The next 6 helical transmembrane spans lie at 61–81, 98–118, 131–151, 178–198, 215–235, and 243–263; these read LEFI…LISM, LFGP…LPIM, LLGP…RVGW, TILG…INVV, FFDK…MYYF, and PVLL…FGIL.

It localises to the cell inner membrane. Functionally, the phosphoenolpyruvate-dependent sugar phosphotransferase system (PTS), a major carbohydrate active -transport system, catalyzes the phosphorylation of incoming sugar substrates concomitant with their translocation across the cell membrane. This system is involved in N-acetylgalactosamine transport. The polypeptide is N-acetylgalactosamine permease IID component (agaD) (Escherichia coli (strain K12)).